The chain runs to 319 residues: V-set and transmembrane domain-containing protein 4 (319 aa).

The N-terminal stretch at 1–23 is a signal peptide; the sequence is MRLRLLALAAAVLLGPAPEVCGA. The Ig-like domain maps to 24-154; the sequence is LNVTVSPGPV…SSATEMRVIS (131 aa). Residues Asn25 and Asn41 are each glycosylated (N-linked (GlcNAc...) asparagine). Cys46 and Cys126 are disulfide-bonded. An N-linked (GlcNAc...) asparagine glycan is attached at Asn143. Residues 180-200 form a helical membrane-spanning segment; that stretch reads AVLVCCVGILSVLLFTLVIAW.

Proteolytically cleaved to generate a bioactive peptide. In terms of tissue distribution, peptide Lv is widely expressed in various tissues and the central nervous system, including the retinal photoreceptor layer, hippocampus, olfactory bulb, and cerebellum.

It is found in the cell membrane. Its subcellular location is the secreted. Its function is as follows. Peptide Lv enhances L-type voltage-gated calcium channel (L-VGCC) currents in retinal photoreceptors. The sequence is that of V-set and transmembrane domain-containing protein 4 (Vstm4) from Mus musculus (Mouse).